A 135-amino-acid chain; its full sequence is Integration host factor subunit beta (135 aa).

The segment covering 83–92 has biased composition (basic and acidic residues); sequence GKELRERVDR. The segment at 83–135 is disordered; sequence GKELRERVDRTVTQGGGMNGNGHAPHGKTGQSQLGSQSPASLHDDGQLNLVRS. The segment covering 111 to 122 has biased composition (polar residues); it reads TGQSQLGSQSPA.

This sequence belongs to the bacterial histone-like protein family. Heterodimer of an alpha and a beta chain.

Functionally, this protein is one of the two subunits of integration host factor, a specific DNA-binding protein that functions in genetic recombination as well as in transcriptional and translational control. The sequence is that of Integration host factor subunit beta from Cupriavidus metallidurans (strain ATCC 43123 / DSM 2839 / NBRC 102507 / CH34) (Ralstonia metallidurans).